Here is a 482-residue protein sequence, read N- to C-terminus: Ribosomal protein uS12 methylthiotransferase RimO (482 aa).

Residues 2–115 (MKVHIITLGC…IAEVVETFQP (114 aa)) form the MTTase N-terminal domain. Residues C11, C47, C79, C177, C181, and C184 each coordinate [4Fe-4S] cluster. Residues 163-394 (RAVGPSAYLK…MRLQQRISRE (232 aa)) enclose the Radical SAM core domain. The TRAM domain maps to 397–466 (RRWLGRVVRV…DYDLWGDVVG (70 aa)).

Belongs to the methylthiotransferase family. RimO subfamily. [4Fe-4S] cluster serves as cofactor.

It localises to the cytoplasm. The catalysed reaction is L-aspartate(89)-[ribosomal protein uS12]-hydrogen + (sulfur carrier)-SH + AH2 + 2 S-adenosyl-L-methionine = 3-methylsulfanyl-L-aspartate(89)-[ribosomal protein uS12]-hydrogen + (sulfur carrier)-H + 5'-deoxyadenosine + L-methionine + A + S-adenosyl-L-homocysteine + 2 H(+). Its function is as follows. Catalyzes the methylthiolation of an aspartic acid residue of ribosomal protein uS12. The polypeptide is Ribosomal protein uS12 methylthiotransferase RimO (Roseiflexus castenholzii (strain DSM 13941 / HLO8)).